The primary structure comprises 182 residues: Small ribosomal subunit protein uS9 (182 aa).

Belongs to the universal ribosomal protein uS9 family.

In Corynebacterium efficiens (strain DSM 44549 / YS-314 / AJ 12310 / JCM 11189 / NBRC 100395), this protein is Small ribosomal subunit protein uS9.